Reading from the N-terminus, the 116-residue chain is DNA polymerase epsilon subunit 4 (116 aa).

Over residues 1 to 10 (MAAAAPGSGA) the composition is skewed to low complexity. Residues 1–36 (MAAAAPGSGAAREEEGTGGDAATPQPPAPTSAPGAR) form a disordered region.

Component of the DNA polymerase epsilon complex consisting of four subunits: the catalytic subunit POLE and the accessory subunits POLE2, POLE3 and POLE4. Interaction with POLE3 is a prerequisite for further binding with POLE and POLE2.

It is found in the nucleus. Functionally, accessory component of the DNA polymerase epsilon complex. Participates in DNA repair and in chromosomal DNA replication. The chain is DNA polymerase epsilon subunit 4 (POLE4) from Bos taurus (Bovine).